The primary structure comprises 65 residues: DNA-directed RNA polymerase subunit omega (65 aa).

Belongs to the RNA polymerase subunit omega family. In terms of assembly, the RNAP catalytic core consists of 2 alpha, 1 beta, 1 beta' and 1 omega subunit. When a sigma factor is associated with the core the holoenzyme is formed, which can initiate transcription.

The enzyme catalyses RNA(n) + a ribonucleoside 5'-triphosphate = RNA(n+1) + diphosphate. Promotes RNA polymerase assembly. Latches the N- and C-terminal regions of the beta' subunit thereby facilitating its interaction with the beta and alpha subunits. In Finegoldia magna (strain ATCC 29328 / DSM 20472 / WAL 2508) (Peptostreptococcus magnus), this protein is DNA-directed RNA polymerase subunit omega.